Reading from the N-terminus, the 591-residue chain is DNA ligase (591 aa).

NAD(+) is bound by residues 38 to 42 (DEKYD), 87 to 88 (SL), and Glu-119. Lys-121 (N6-AMP-lysine intermediate) is an active-site residue. The NAD(+) site is built by Arg-142, Glu-181, Lys-298, and Lys-322. The Zn(2+) site is built by Cys-415, Cys-418, Cys-433, and Cys-439.

This sequence belongs to the NAD-dependent DNA ligase family. LigA subfamily. The cofactor is Mg(2+). Requires Mn(2+) as cofactor.

It carries out the reaction NAD(+) + (deoxyribonucleotide)n-3'-hydroxyl + 5'-phospho-(deoxyribonucleotide)m = (deoxyribonucleotide)n+m + AMP + beta-nicotinamide D-nucleotide.. DNA ligase that catalyzes the formation of phosphodiester linkages between 5'-phosphoryl and 3'-hydroxyl groups in double-stranded DNA using NAD as a coenzyme and as the energy source for the reaction. It is essential for DNA replication and repair of damaged DNA. The chain is DNA ligase from Wigglesworthia glossinidia brevipalpis.